The chain runs to 1497 residues: DNA-directed RNA polymerase subunit beta (1497 aa).

It belongs to the RNA polymerase beta chain family. As to quaternary structure, the RNAP catalytic core consists of 2 alpha, 1 beta, 1 beta' and 1 omega subunit. When a sigma factor is associated with the core the holoenzyme is formed, which can initiate transcription.

It catalyses the reaction RNA(n) + a ribonucleoside 5'-triphosphate = RNA(n+1) + diphosphate. Functionally, DNA-dependent RNA polymerase catalyzes the transcription of DNA into RNA using the four ribonucleoside triphosphates as substrates. In Trichlorobacter lovleyi (strain ATCC BAA-1151 / DSM 17278 / SZ) (Geobacter lovleyi), this protein is DNA-directed RNA polymerase subunit beta.